Reading from the N-terminus, the 373-residue chain is Diels-Alderase (373 aa).

This sequence belongs to the Diels-Alderase family.

It catalyses the reaction (5S)-3-[(2E,6R,8E,10E,12E)-2,6-dimethyltetradeca-2,8,10,12-tetraenoyl]-5-(hydroxymethyl)pyrrolidine-2,4-dione = trichosetin. The protein operates within mycotoxin biosynthesis. In terms of biological role, hybrid PKS-NRPS synthetase; part of the gene cluster that mediates the biosynthesis of trichosetin, a trans-fused decalin-containing tetramic acid with antimicrobial activity. The PKS module of PKS-NRPS1 together with the enoylreductase (ER) catalyze the formation of the polyketide unit which is then conjugated to L-serine by the condensation domain of the PKS-NRPS1 NRPS module. Activity of the Dieckmann cyclase domain (RED) results in release of the Dieckmann product intermediate. Diels-Alderase (DA) is involved in endo-selective Diels-Alder cycloaddition to form the decalin ring, leading to the production of N-desmethylequisetin also called trichosetin. The cluster does not contain the equisetin N-methyltransferase and consequently, trichosetin is isolated as final product. The sequence is that of Diels-Alderase from Gibberella fujikuroi (strain CBS 195.34 / IMI 58289 / NRRL A-6831) (Bakanae and foot rot disease fungus).